The sequence spans 405 residues: NADH-quinone oxidoreductase subunit D (405 aa).

It belongs to the complex I 49 kDa subunit family. In terms of assembly, NDH-1 is composed of 14 different subunits. Subunits NuoB, C, D, E, F, and G constitute the peripheral sector of the complex.

It is found in the cell inner membrane. It catalyses the reaction a quinone + NADH + 5 H(+)(in) = a quinol + NAD(+) + 4 H(+)(out). Its function is as follows. NDH-1 shuttles electrons from NADH, via FMN and iron-sulfur (Fe-S) centers, to quinones in the respiratory chain. The immediate electron acceptor for the enzyme in this species is believed to be ubiquinone. Couples the redox reaction to proton translocation (for every two electrons transferred, four hydrogen ions are translocated across the cytoplasmic membrane), and thus conserves the redox energy in a proton gradient. This chain is NADH-quinone oxidoreductase subunit D, found in Leptospira borgpetersenii serovar Hardjo-bovis (strain L550).